The chain runs to 98 residues: NADH-ubiquinone oxidoreductase chain 4L (98 aa).

A run of 3 helical transmembrane segments spans residues 1–21 (MSLT…GLLM), 29–49 (SLLC…MTIL), and 61–81 (IILL…LVMV).

The protein belongs to the complex I subunit 4L family. As to quaternary structure, core subunit of respiratory chain NADH dehydrogenase (Complex I) which is composed of 45 different subunits.

It localises to the mitochondrion inner membrane. The catalysed reaction is a ubiquinone + NADH + 5 H(+)(in) = a ubiquinol + NAD(+) + 4 H(+)(out). Functionally, core subunit of the mitochondrial membrane respiratory chain NADH dehydrogenase (Complex I) which catalyzes electron transfer from NADH through the respiratory chain, using ubiquinone as an electron acceptor. Part of the enzyme membrane arm which is embedded in the lipid bilayer and involved in proton translocation. The polypeptide is NADH-ubiquinone oxidoreductase chain 4L (MT-ND4L) (Stenoderma rufum (Red fruit bat)).